The chain runs to 151 residues: Myosin light polypeptide 6 (151 aa).

Cys-2 carries the N-acetylcysteine modification. Positions 7-42 (DQTAEFKEAFQLFDRTGDGKILYSQCGDVMRALGQN) constitute an EF-hand 1 domain. Ser-57 bears the Phosphoserine mark. Lys-81 is subject to N6-acetyllysine. EF-hand domains follow at residues 84-119 (GTYE…LGEK) and 119-151 (KMTE…VLNG).

In terms of assembly, myosin is a hexamer of 2 heavy chains and 4 light chains. Interacts with SPATA6.

Functionally, regulatory light chain of myosin. Does not bind calcium. The polypeptide is Myosin light polypeptide 6 (Myl6) (Rattus norvegicus (Rat)).